Reading from the N-terminus, the 334-residue chain is D-alanine--D-alanine ligase (334 aa).

The region spanning 111 to 315 is the ATP-grasp domain; it reads KRVCLSHGVP…YEDLCIEILR (205 aa). 141–196 is a binding site for ATP; sequence AAEFGLPLMLKAPHEGSTIGIAKVETAEGMQAGFDLCAKYEAVVLVEQFVKGRELT. Mg(2+) is bound by residues Asp268, Glu282, and Asn284.

It belongs to the D-alanine--D-alanine ligase family. Mg(2+) is required as a cofactor. It depends on Mn(2+) as a cofactor.

It is found in the cytoplasm. The catalysed reaction is 2 D-alanine + ATP = D-alanyl-D-alanine + ADP + phosphate + H(+). The protein operates within cell wall biogenesis; peptidoglycan biosynthesis. In terms of biological role, cell wall formation. This Herminiimonas arsenicoxydans protein is D-alanine--D-alanine ligase.